A 299-amino-acid polypeptide reads, in one-letter code: Tyrosine recombinase XerC (299 aa).

The 85-residue stretch at 1-85 folds into the Core-binding (CB) domain; sequence MDQHLDAYCM…AVRGFYKYLN (85 aa). The 180-residue stretch at 106–285 folds into the Tyr recombinase domain; that stretch reads RLPKTLDTDR…DFQHLATVYD (180 aa). Residues arginine 146, lysine 170, histidine 237, arginine 240, and histidine 263 contribute to the active site. The O-(3'-phospho-DNA)-tyrosine intermediate role is filled by tyrosine 272.

The protein belongs to the 'phage' integrase family. XerC subfamily. Forms a cyclic heterotetrameric complex composed of two molecules of XerC and two molecules of XerD.

It is found in the cytoplasm. Functionally, site-specific tyrosine recombinase, which acts by catalyzing the cutting and rejoining of the recombining DNA molecules. The XerC-XerD complex is essential to convert dimers of the bacterial chromosome into monomers to permit their segregation at cell division. It also contributes to the segregational stability of plasmids. This chain is Tyrosine recombinase XerC, found in Pseudomonas syringae pv. syringae (strain B728a).